Reading from the N-terminus, the 544-residue chain is Pyruvate kinase (544 aa).

Arg31 is a substrate binding site. Residues Asn33 and Asp61 each contribute to the K(+) site. ATP is bound at residue 33-36 (NSAH). Arg68 provides a ligand contact to ATP. A Mg(2+)-binding site is contributed by Glu204. Positions 227, 228, and 260 each coordinate substrate. Asp228 contacts Mg(2+).

Belongs to the pyruvate kinase family. As to quaternary structure, homotetramer. Requires Mg(2+) as cofactor. It depends on K(+) as a cofactor.

The enzyme catalyses pyruvate + ATP = phosphoenolpyruvate + ADP + H(+). It participates in carbohydrate degradation; glycolysis; pyruvate from D-glyceraldehyde 3-phosphate: step 5/5. This Thermoplasma acidophilum (strain ATCC 25905 / DSM 1728 / JCM 9062 / NBRC 15155 / AMRC-C165) protein is Pyruvate kinase.